A 221-amino-acid polypeptide reads, in one-letter code: uncharacterized protein (221 aa).

Positions 1–22 are disordered; it reads MGLDNFTAPSTGTTPAGSPFLR. Polar residues predominate over residues 7–16; it reads TAPSTGTTPA.

It belongs to the IIV-6 259R family.

This is an uncharacterized protein from Invertebrate iridescent virus 3 (IIV-3).